Consider the following 131-residue polypeptide: Arsenate reductase 1 (131 aa).

Catalysis depends on nucleophile residues cysteine 10, cysteine 82, and cysteine 89. 2 disulfides stabilise this stretch: cysteine 10–cysteine 82 and cysteine 82–cysteine 89.

The protein belongs to the low molecular weight phosphotyrosine protein phosphatase family. Thioredoxin-coupled ArsC subfamily.

The protein resides in the cytoplasm. It catalyses the reaction arsenate + [thioredoxin]-dithiol + H(+) = arsenite + [thioredoxin]-disulfide + H2O. Its function is as follows. Catalyzes the reduction of arsenate [As(V)] to arsenite [As(III)]. This is Arsenate reductase 1 from Staphylococcus saprophyticus subsp. saprophyticus (strain ATCC 15305 / DSM 20229 / NCIMB 8711 / NCTC 7292 / S-41).